A 354-amino-acid polypeptide reads, in one-letter code: Protein RecA (354 aa).

67-74 is an ATP binding site; sequence GPESSGKT.

It belongs to the RecA family.

It is found in the cytoplasm. Functionally, can catalyze the hydrolysis of ATP in the presence of single-stranded DNA, the ATP-dependent uptake of single-stranded DNA by duplex DNA, and the ATP-dependent hybridization of homologous single-stranded DNAs. It interacts with LexA causing its activation and leading to its autocatalytic cleavage. This is Protein RecA from Chlamydia muridarum (strain MoPn / Nigg).